A 123-amino-acid chain; its full sequence is Small ribosomal subunit protein uS12cz/uS12cy (123 aa).

Belongs to the universal ribosomal protein uS12 family. Part of the 30S ribosomal subunit.

It localises to the plastid. Its subcellular location is the chloroplast. In terms of biological role, with S4 and S5 plays an important role in translational accuracy. Located at the interface of the 30S and 50S subunits. This is Small ribosomal subunit protein uS12cz/uS12cy (rps12-A) from Drimys granadensis.